Here is a 209-residue protein sequence, read N- to C-terminus: Tumor suppressor candidate gene 1 protein (209 aa).

Disordered stretches follow at residues methionine 1–arginine 55, alanine 111–arginine 157, and leucine 172–leucine 209. Over residues cysteine 14–tryptophan 47 the composition is skewed to gly residues. A coiled-coil region spans residues leucine 70–leucine 114. The segment covering glutamate 125 to glycine 149 has biased composition (basic and acidic residues). Serine 150 bears the Phosphoserine mark. Residues arginine 152–arginine 177 adopt a coiled-coil conformation. Positions leucine 174–glutamine 188 are enriched in basic and acidic residues.

Widely expressed at low level. Expressed at higher level in testis, weakly expressed in muscle, colon, lung and spleen. Not detected in 3 non small cell lung carcinoma (NSCLC) cell lines with homozygous deletion of the 9p region, while it is down-regulated in 3 other tumor cell lines.

The sequence is that of Tumor suppressor candidate gene 1 protein (TUSC1) from Homo sapiens (Human).